The sequence spans 160 residues: GTP-dependent dephospho-CoA kinase (160 aa).

Residues Asp-45, Ile-46, Val-47, Asp-59, Lys-61, Glu-108, and Asp-130 each coordinate GTP.

Belongs to the GTP-dependent DPCK family.

It carries out the reaction 3'-dephospho-CoA + GTP = GDP + CoA + H(+). It participates in cofactor biosynthesis; coenzyme A biosynthesis. Catalyzes the GTP-dependent phosphorylation of the 3'-hydroxyl group of dephosphocoenzyme A to form coenzyme A (CoA). The protein is GTP-dependent dephospho-CoA kinase of Staphylothermus marinus (strain ATCC 43588 / DSM 3639 / JCM 9404 / F1).